The chain runs to 263 residues: Ribosomal RNA small subunit methyltransferase J (263 aa).

Residues 115 to 116 (RD), 131 to 132 (ER), and Asp181 contribute to the S-adenosyl-L-methionine site.

The protein belongs to the methyltransferase superfamily. RsmJ family.

The protein localises to the cytoplasm. It catalyses the reaction guanosine(1516) in 16S rRNA + S-adenosyl-L-methionine = N(2)-methylguanosine(1516) in 16S rRNA + S-adenosyl-L-homocysteine + H(+). Its function is as follows. Specifically methylates the guanosine in position 1516 of 16S rRNA. In Hahella chejuensis (strain KCTC 2396), this protein is Ribosomal RNA small subunit methyltransferase J.